A 129-amino-acid chain; its full sequence is Profilin-4 (129 aa).

The protein belongs to the profilin family. As to expression, expressed in testis, in germ cells in seminiferous tubules (at protein level).

It localises to the cytoplasm. In terms of biological role, involved in male fertility. Required for manchette development and acrosome biogenesis during spermiogenesis. Binds in vitro to phospholipids, including phosphatidylinositol 3-phosphate (PtdIns(3)P), phosphatidylinositol 4,5-bisphosphate (PtdIns(4,5)P2), phosphatidylinositol 4-phosphate (PtdIns(4)P) and phosphatidic acid (PA). Contrary to other profilin family members, does not bind to actin in vitro. This is Profilin-4 (Pfn4) from Mus musculus (Mouse).